A 137-amino-acid polypeptide reads, in one-letter code: Phosphoribosyl-AMP cyclohydrolase (137 aa).

Position 84 (Asp-84) interacts with Mg(2+). Residue Cys-85 coordinates Zn(2+). 2 residues coordinate Mg(2+): Asp-86 and Asp-88. Residues Cys-101 and Cys-108 each coordinate Zn(2+).

The protein belongs to the PRA-CH family. Homodimer. Requires Mg(2+) as cofactor. Zn(2+) is required as a cofactor.

It is found in the cytoplasm. It carries out the reaction 1-(5-phospho-beta-D-ribosyl)-5'-AMP + H2O = 1-(5-phospho-beta-D-ribosyl)-5-[(5-phospho-beta-D-ribosylamino)methylideneamino]imidazole-4-carboxamide. The protein operates within amino-acid biosynthesis; L-histidine biosynthesis; L-histidine from 5-phospho-alpha-D-ribose 1-diphosphate: step 3/9. Its function is as follows. Catalyzes the hydrolysis of the adenine ring of phosphoribosyl-AMP. This is Phosphoribosyl-AMP cyclohydrolase from Chlorobium phaeovibrioides (strain DSM 265 / 1930) (Prosthecochloris vibrioformis (strain DSM 265)).